Reading from the N-terminus, the 612-residue chain is UPF0329 protein ECU05_1680/ECU11_0050 (612 aa).

Positions 304–330 are enriched in basic and acidic residues; that stretch reads RQRREMEKKEEEKKKEEEKKKEEEKRK. Residues 304 to 424 form a disordered region; it reads RQRREMEKKE…RKRYKIHRRV (121 aa). The segment covering 331–349 has biased composition (basic residues); that stretch reads EEKKKKKEEKKEEKKKKKE. The segment covering 350 to 388 has biased composition (basic and acidic residues); that stretch reads EKKEEKKEEKKEEKKEEKKEEKKEEKKEEKSGKSLREGE.

The protein belongs to the UPF0329 family.

The chain is UPF0329 protein ECU05_1680/ECU11_0050 from Encephalitozoon cuniculi (strain GB-M1) (Microsporidian parasite).